Here is a 201-residue protein sequence, read N- to C-terminus: Keratin-associated protein 4-12 (201 aa).

A run of 30 repeats spans residues 5-9, 20-24, 25-29, 30-34, 35-39, 40-44, 45-49, 50-54, 55-59, 60-64, 65-69, 70-74, 75-79, 80-84, 85-89, 90-94, 95-99, 100-104, 105-109, 110-114, 115-119, 120-124, 125-129, 130-134, 135-139, 140-144, 145-149, 155-159, 160-164, and 165-169. Positions 5 to 169 are 31 X 5 AA repeats of C-C-[GRQVIL]-[SPTR]-[VSTQPC]; it reads CCGSVCSDQG…CCRPCCCLRP (165 aa).

It belongs to the KRTAP type 4 family. In terms of assembly, interacts with hair keratins. Expressed in the hair follicles.

In terms of biological role, in the hair cortex, hair keratin intermediate filaments are embedded in an interfilamentous matrix, consisting of hair keratin-associated proteins (KRTAP), which are essential for the formation of a rigid and resistant hair shaft through their extensive disulfide bond cross-linking with abundant cysteine residues of hair keratins. The matrix proteins include the high-sulfur and high-glycine-tyrosine keratins. This chain is Keratin-associated protein 4-12 (KRTAP4-12), found in Homo sapiens (Human).